A 1215-amino-acid polypeptide reads, in one-letter code: DNA-directed RNA polymerase subunit beta' (1215 aa).

Positions 60, 62, 75, and 78 each coordinate Zn(2+). Residues aspartate 450, aspartate 452, and aspartate 454 each contribute to the Mg(2+) site. 4 residues coordinate Zn(2+): cysteine 818, cysteine 892, cysteine 899, and cysteine 902.

This sequence belongs to the RNA polymerase beta' chain family. As to quaternary structure, the RNAP catalytic core consists of 2 alpha, 1 beta, 1 beta' and 1 omega subunit. When a sigma factor is associated with the core the holoenzyme is formed, which can initiate transcription. The cofactor is Mg(2+). Zn(2+) is required as a cofactor.

The enzyme catalyses RNA(n) + a ribonucleoside 5'-triphosphate = RNA(n+1) + diphosphate. DNA-dependent RNA polymerase catalyzes the transcription of DNA into RNA using the four ribonucleoside triphosphates as substrates. The sequence is that of DNA-directed RNA polymerase subunit beta' from Streptococcus sanguinis (strain SK36).